Here is a 170-residue protein sequence, read N- to C-terminus: Endoribonuclease YbeY (170 aa).

The Zn(2+) site is built by His-128, His-132, and His-138.

The protein belongs to the endoribonuclease YbeY family. It depends on Zn(2+) as a cofactor.

The protein localises to the cytoplasm. Its function is as follows. Single strand-specific metallo-endoribonuclease involved in late-stage 70S ribosome quality control and in maturation of the 3' terminus of the 16S rRNA. The sequence is that of Endoribonuclease YbeY from Ruegeria sp. (strain TM1040) (Silicibacter sp.).